Reading from the N-terminus, the 156-residue chain is tRNA-specific adenosine deaminase (156 aa).

A CMP/dCMP-type deaminase domain is found at 2 to 120; it reads TNDIYFMTLA…GSLMNLLQQS (119 aa). Position 53 (H53) interacts with Zn(2+). Catalysis depends on E55, which acts as the Proton donor. Residues C83 and C86 each coordinate Zn(2+).

This sequence belongs to the cytidine and deoxycytidylate deaminase family. In terms of assembly, homodimer. The cofactor is Zn(2+).

It catalyses the reaction adenosine(34) in tRNA + H2O + H(+) = inosine(34) in tRNA + NH4(+). Catalyzes the deamination of adenosine to inosine at the wobble position 34 of tRNA(Arg2). This Staphylococcus aureus (strain Mu50 / ATCC 700699) protein is tRNA-specific adenosine deaminase.